A 476-amino-acid chain; its full sequence is Bifunctional protein HldE (476 aa).

A ribokinase region spans residues Met-1–Thr-318. Residue Asn-195–Glu-198 participates in ATP binding. Residue Asp-264 is part of the active site. Positions Met-344–Asp-476 are cytidylyltransferase.

In the N-terminal section; belongs to the carbohydrate kinase PfkB family. The protein in the C-terminal section; belongs to the cytidylyltransferase family. As to quaternary structure, homodimer.

It carries out the reaction D-glycero-beta-D-manno-heptose 7-phosphate + ATP = D-glycero-beta-D-manno-heptose 1,7-bisphosphate + ADP + H(+). It catalyses the reaction D-glycero-beta-D-manno-heptose 1-phosphate + ATP + H(+) = ADP-D-glycero-beta-D-manno-heptose + diphosphate. It participates in nucleotide-sugar biosynthesis; ADP-L-glycero-beta-D-manno-heptose biosynthesis; ADP-L-glycero-beta-D-manno-heptose from D-glycero-beta-D-manno-heptose 7-phosphate: step 1/4. Its pathway is nucleotide-sugar biosynthesis; ADP-L-glycero-beta-D-manno-heptose biosynthesis; ADP-L-glycero-beta-D-manno-heptose from D-glycero-beta-D-manno-heptose 7-phosphate: step 3/4. Functionally, catalyzes the phosphorylation of D-glycero-D-manno-heptose 7-phosphate at the C-1 position to selectively form D-glycero-beta-D-manno-heptose-1,7-bisphosphate. Its function is as follows. Catalyzes the ADP transfer from ATP to D-glycero-beta-D-manno-heptose 1-phosphate, yielding ADP-D-glycero-beta-D-manno-heptose. This Haemophilus influenzae (strain PittGG) protein is Bifunctional protein HldE.